The primary structure comprises 228 residues: 30 kDa heat shock protein (228 aa).

3 disordered regions span residues 34–53 (EVQG…PTRT), 117–136 (KGEP…DVDE), and 144–174 (TATG…APAE). The sHSP domain maps to 49–228 (QPTRTFSPKF…KHETIRIAIN (180 aa)). Low complexity predominate over residues 144–158 (TATGANNQNNQQVAQ).

It belongs to the small heat shock protein (HSP20) family.

It is found in the cytoplasm. In Neurospora crassa (strain ATCC 24698 / 74-OR23-1A / CBS 708.71 / DSM 1257 / FGSC 987), this protein is 30 kDa heat shock protein (hsp30).